A 474-amino-acid polypeptide reads, in one-letter code: Solute carrier family 49 member A3 (474 aa).

The tract at residues 1 to 20 (MEGESAETEPLIQSSSAADR) is disordered. Transmembrane regions (helical) follow at residues 38-58 (WFIL…WLTF), 69-89 (LCVS…AAVV), 105-126 (CSLI…CGVL), 134-154 (VFAV…LVIF), 175-195 (LASM…PLIV), 201-221 (LFLL…LATL), 258-278 (WILL…STLL), 290-310 (GFAG…AFLL), 326-346 (ICMC…QLPA), 349-369 (VLLV…YPVG), 388-408 (LIFT…QALA), and 428-448 (VPVL…VVFF).

Belongs to the major facilitator superfamily.

Its subcellular location is the membrane. This is Solute carrier family 49 member A3 (slc49a3) from Danio rerio (Zebrafish).